The sequence spans 350 residues: CMP-N-acetylneuraminate-beta-galactosamide-alpha-2,3-sialyltransferase 2 (350 aa).

At Met-1 to Arg-6 the chain is on the cytoplasmic side. The chain crosses the membrane as a helical; Signal-anchor for type II membrane protein span at residues Val-7–Ser-27. Topologically, residues His-28–Asn-350 are lumenal. Disulfide bonds link Cys-70-Cys-75, Cys-72-Cys-149, and Cys-152-Cys-291. Positions 116, 157, and 180 each coordinate substrate. Asn-211 is a glycosylation site (N-linked (GlcNAc...) asparagine). Residues Tyr-240, Tyr-276, Gly-280, Gly-300, His-309, and His-326 each coordinate substrate.

Belongs to the glycosyltransferase 29 family. In terms of assembly, homodimer; disulfide-linked. Homodimer formation occurs in the endoplasmic reticulum. In terms of processing, the soluble form derives from the membrane form by proteolytic processing. Post-translationally, N-glycosylated; necessary for proper exit from endoplasmic reticulum and trafficking to the Golgi apparatus. As to expression, strongly expressed in brain and liver and to a lesser extent in heart and kidney. Scarcely detectable in lung, pancreas, spleen and submaxillary gland. Expressed in L5 dorsal root ganglion (DRG) neurons (at protein level).

It is found in the golgi apparatus. The protein resides in the golgi stack membrane. The protein localises to the secreted. The catalysed reaction is a beta-D-galactosyl-(1-&gt;3)-N-acetyl-alpha-D-galactosaminyl derivative + CMP-N-acetyl-beta-neuraminate = an N-acetyl-alpha-neuraminyl-(2-&gt;3)-beta-D-galactosyl-(1-&gt;3)-N-acetyl-alpha-D-galactosaminyl derivative + CMP + H(+). It catalyses the reaction a ganglioside GM1 (d18:1(4E)) + CMP-N-acetyl-beta-neuraminate = a ganglioside GD1a (d18:1(4E)) + CMP + H(+). The enzyme catalyses ganglioside GM1 (d18:1(4E)/18:0) + CMP-N-acetyl-beta-neuraminate = ganglioside GD1a (18:1(4E)/18:0) + CMP + H(+). It carries out the reaction a ganglioside GA1 + CMP-N-acetyl-beta-neuraminate = a ganglioside GM1b + CMP + H(+). The catalysed reaction is a ganglioside GA1 (d18:1(4E)) + CMP-N-acetyl-beta-neuraminate = a ganglioside GM1b (d18:1(4E)) + CMP + H(+). It catalyses the reaction a ganglioside GD1b + CMP-N-acetyl-beta-neuraminate = a ganglioside GT1b + CMP + H(+). The enzyme catalyses a ganglioside GD1b (d18:1(4E)) + CMP-N-acetyl-beta-neuraminate = a ganglioside GT1b (d18:1(4E)) + CMP + H(+). It carries out the reaction a globoside GalGb4Cer + CMP-N-acetyl-beta-neuraminate = a globoside MSGG + CMP + H(+). The protein operates within protein modification; protein glycosylation. It functions in the pathway glycolipid biosynthesis. In terms of biological role, a beta-galactoside alpha2-3 sialyltransferase primarily involved in terminal sialylation of ganglio and globo series glycolipids. Catalyzes the transfer of sialic acid (N-acetyl-neuraminic acid; Neu5Ac) from the nucleotide sugar donor CMP-Neu5Ac onto acceptor Galbeta-(1-&gt;3)-GalNAc-terminated glycoconjugates through an alpha2-3 linkage. Sialylates GM1/GM1a, GA1/asialo-GM1 and GD1b gangliosides to form GD1a, GM1b and GT1b, respectively. Together with ST3GAL3, primarily responsible for biosynthesis of brain GD1a and GT1b that function as ligands for myelin-associated glycoprotein MAG on axons, regulating MAG expression and axonal myelin stability and regeneration. Via GT1b regulates TLR2 signaling in spinal cord microglia in response to nerve injury. Responsible for the sialylation of the pluripotent stem cell- and cancer stem cell-associated antigen SSEA3, forming SSEA4. Sialylates with low efficiency asialofetuin, presumably onto O-glycosidically linked Galbeta-(1-&gt;3)-GalNAc-O-Ser. In Mus musculus (Mouse), this protein is CMP-N-acetylneuraminate-beta-galactosamide-alpha-2,3-sialyltransferase 2.